The primary structure comprises 138 residues: Large ribosomal subunit protein bL17 (138 aa).

The protein belongs to the bacterial ribosomal protein bL17 family. As to quaternary structure, part of the 50S ribosomal subunit. Contacts protein L32.

This is Large ribosomal subunit protein bL17 from Buchnera aphidicola subsp. Schizaphis graminum (strain Sg).